The chain runs to 309 residues: MAGTGVVAVYGEGAMTETKQKSPFSVKVGLAQMLRGGVIMDVVNAEQARIAEEAGACAVMALERVPADIRAQGGVARMSDPEMIKEIKNAVTIPVMAKARIGHFVEAQILEAIGVDYVDESEVLTLADEDNHINKHNFKIPFVCGCRNLGEALRRIREGAAMIRTKGEAGTGNVVEAVRHVRSVNGAIRLLRSMDDDEVFTYAKKIAAPYDLVVQTKELGRLPVVQFAAGGVATPADAALMMQLGCDGVFVGSGVFKSGDPVKRAKAIVQAVTNYRDAAVLAEVSCGLGEAMVGLNLDDKVERFASRSE.

Residue Met-1 is modified to N-acetylmethionine. Asp-41 is a D-ribose 5-phosphate binding site. The active-site Schiff-base intermediate with D-ribose 5-phosphate is Lys-98. Gly-170 provides a ligand contact to D-ribose 5-phosphate. Arg-182 contributes to the D-glyceraldehyde 3-phosphate binding site. Residues Gly-231 and 252-253 contribute to the D-ribose 5-phosphate site; that span reads GS.

The protein belongs to the PdxS/SNZ family. Homodimer or heterodimer with PDX1.2 or PDX1.3. Interacts with PDX2. In terms of tissue distribution, expressed in flowers, shoots, leaves and weakly in roots.

It localises to the cytoplasm. It catalyses the reaction aldehydo-D-ribose 5-phosphate + D-glyceraldehyde 3-phosphate + L-glutamine = pyridoxal 5'-phosphate + L-glutamate + phosphate + 3 H2O + H(+). It participates in cofactor biosynthesis; pyridoxal 5'-phosphate biosynthesis. In terms of biological role, catalyzes the formation of pyridoxal 5'-phosphate from ribose 5-phosphate (RBP), glyceraldehyde 3-phosphate (G3P) and ammonia. The ammonia is provided by PDX2. Can also use ribulose 5-phosphate and dihydroxyacetone phosphate as substrates, resulting from enzyme-catalyzed isomerization of RBP and G3P, respectively. Also plays an indirect role in resistance to singlet oxygen-generating photosensitizers. This chain is Pyridoxal 5'-phosphate synthase subunit PDX1.1 (PDX11), found in Arabidopsis thaliana (Mouse-ear cress).